A 138-amino-acid polypeptide reads, in one-letter code: RutC family protein UK114 (138 aa).

This sequence belongs to the RutC family.

Functionally, molecular chaperone. Seems to fulfill an ATP-independent, HSP70-like function in protein folding. May protect essential factors of cell proliferation during heat shock. No role in calpain activation. This is RutC family protein UK114 from Drosophila melanogaster (Fruit fly).